The following is a 717-amino-acid chain: Cleavage stimulation factor subunit 3 (717 aa).

Position 2 is an N-acetylserine (serine 2). HAT repeat units lie at residues 45-77 (QPID…AEIK), 79-110 (KNYD…YVRE), 117-152 (SYKE…FLKG), 163-196 (QRIT…YEEG), 221-261 (KEYE…WEKS), 271-303 (LITK…YLEQ), 319-352 (LFSD…YEES), 354-387 (MKYE…FARR), and 458-494 (NEDN…FESN). A disordered region spans residues 684 to 705 (VKRPNEDSDEDEEKGAVVPPVH). Serine 691 is subject to Phosphoserine.

Homodimer. The CSTF complex is composed of CSTF1 (50 kDa subunit), CSTF2 (64 kDa subunit) and CSTF3 (77 kDa subunit). CSTF3 directly interacts with CSTF1 and CSTF2. Interacts with FIP1L1.

It is found in the nucleus. In terms of biological role, one of the multiple factors required for polyadenylation and 3'-end cleavage of mammalian pre-mRNAs. The polypeptide is Cleavage stimulation factor subunit 3 (CSTF3) (Homo sapiens (Human)).